The chain runs to 1368 residues: DNA-directed RNA polymerase subunit beta (1368 aa).

This sequence belongs to the RNA polymerase beta chain family. In terms of assembly, the RNAP catalytic core consists of 2 alpha, 1 beta, 1 beta' and 1 omega subunit. When a sigma factor is associated with the core the holoenzyme is formed, which can initiate transcription.

It carries out the reaction RNA(n) + a ribonucleoside 5'-triphosphate = RNA(n+1) + diphosphate. Its function is as follows. DNA-dependent RNA polymerase catalyzes the transcription of DNA into RNA using the four ribonucleoside triphosphates as substrates. The sequence is that of DNA-directed RNA polymerase subunit beta from Janthinobacterium sp. (strain Marseille) (Minibacterium massiliensis).